The sequence spans 186 residues: Elongation factor P (186 aa).

This sequence belongs to the elongation factor P family.

The protein resides in the cytoplasm. It functions in the pathway protein biosynthesis; polypeptide chain elongation. In terms of biological role, involved in peptide bond synthesis. Stimulates efficient translation and peptide-bond synthesis on native or reconstituted 70S ribosomes in vitro. Probably functions indirectly by altering the affinity of the ribosome for aminoacyl-tRNA, thus increasing their reactivity as acceptors for peptidyl transferase. The protein is Elongation factor P of Streptococcus pneumoniae (strain Hungary19A-6).